The primary structure comprises 334 residues: L-lactate dehydrogenase B chain (334 aa).

NAD(+) contacts are provided by residues 30 to 58 and arginine 100; that span reads GQVGMACAVSILLRDLCDELALVDVMEDR. Arginine 107, asparagine 139, and arginine 170 together coordinate substrate. NAD(+) is bound at residue asparagine 139. Residue histidine 194 is the Proton acceptor of the active site. Substrate is bound at residue threonine 249.

The protein belongs to the LDH/MDH superfamily. LDH family. As to quaternary structure, homotetramer.

The protein localises to the cytoplasm. The catalysed reaction is (S)-lactate + NAD(+) = pyruvate + NADH + H(+). It participates in fermentation; pyruvate fermentation to lactate; (S)-lactate from pyruvate: step 1/1. Its function is as follows. Interconverts simultaneously and stereospecifically pyruvate and lactate with concomitant interconversion of NADH and NAD(+). The sequence is that of L-lactate dehydrogenase B chain (ldhb) from Fundulus heteroclitus (Killifish).